We begin with the raw amino-acid sequence, 534 residues long: Calcium uptake protein 1 homolog, mitochondrial (534 aa).

Residues 1–32 constitute a mitochondrion transit peptide; it reads MLHCSFLRVIPIKNASKRLIIVRSLTSAPAKT. The disordered stretch occupies residues 131–150; it reads PEASQKEEVTESNGEVEEVK. EF-hand domains lie at 271-306, 338-359, and 466-501; these read TSHADFALAFKIFDVDGNGALDKEEFTKVQQLIMSQ, KDGKGSLSSEKFIEFQERLQHD, and LSDHVVDVVITLFDDNLDGKLSHEEMVAVMRRRMRR. Residues Asp-284, Asp-286, Asn-288, and Glu-295 each contribute to the Ca(2+) site.

It belongs to the MICU1 family. MICU1 subfamily. As to expression, expressed at low levels in PLM touch receptor neurons, germ cells, epidermis, and muscles.

It is found in the mitochondrion intermembrane space. The protein localises to the mitochondrion inner membrane. Functionally, calcium sensor of the mitochondrial calcium uniporter (mcu-1) channel, which senses calcium level via its EF-hand domains. At low calcium levels, micu-1 occludes the pore of the mcu-1 channel, preventing mitochondrial calcium uptake. At higher calcium levels, calcium-binding to micu-1 induces a conformational change that weakens mcu-1-micu-1 interactions and moves micu-1 away from the pore, allowing calcium permeation through the mcu-1 channel. Also required to protect against manganese toxicity by preventing manganese uptake by mcu-1. Modulates the activity of the mitochondrial calcium uniporter protein mcu-1 depending on the level of intracellular calcium in PLM touch receptor neurons following axonal injury. The chain is Calcium uptake protein 1 homolog, mitochondrial from Caenorhabditis elegans.